Here is a 355-residue protein sequence, read N- to C-terminus: UDP-3-O-acylglucosamine N-acyltransferase (355 aa).

The active-site Proton acceptor is the histidine 252.

The protein belongs to the transferase hexapeptide repeat family. LpxD subfamily. Homotrimer.

It carries out the reaction a UDP-3-O-[(3R)-3-hydroxyacyl]-alpha-D-glucosamine + a (3R)-hydroxyacyl-[ACP] = a UDP-2-N,3-O-bis[(3R)-3-hydroxyacyl]-alpha-D-glucosamine + holo-[ACP] + H(+). It functions in the pathway bacterial outer membrane biogenesis; LPS lipid A biosynthesis. In terms of biological role, catalyzes the N-acylation of UDP-3-O-acylglucosamine using 3-hydroxyacyl-ACP as the acyl donor. Is involved in the biosynthesis of lipid A, a phosphorylated glycolipid that anchors the lipopolysaccharide to the outer membrane of the cell. This chain is UDP-3-O-acylglucosamine N-acyltransferase, found in Polynucleobacter necessarius subsp. necessarius (strain STIR1).